Here is a 135-residue protein sequence, read N- to C-terminus: MKNAGPSQRQLRVAEQVRHAVAHILQRGILLDDVLKDIVISVSEVRISPDLKIATCFVSPLSTLKNTSHTDVVNTLNKHSRFLRGEISHALRQMKYMPELRFRLDNSFDNFSKIDALLRSPEVARDLHHSDKDED.

Belongs to the RbfA family. In terms of assembly, monomer. Binds 30S ribosomal subunits, but not 50S ribosomal subunits or 70S ribosomes.

The protein resides in the cytoplasm. One of several proteins that assist in the late maturation steps of the functional core of the 30S ribosomal subunit. Associates with free 30S ribosomal subunits (but not with 30S subunits that are part of 70S ribosomes or polysomes). Required for efficient processing of 16S rRNA. May interact with the 5'-terminal helix region of 16S rRNA. This chain is Ribosome-binding factor A, found in Bartonella tribocorum (strain CIP 105476 / IBS 506).